Reading from the N-terminus, the 298-residue chain is Probable endonuclease 4 (298 aa).

Zn(2+) is bound by residues His69, His111, Glu146, Asp180, His183, His215, Asp228, His230, and Glu260.

This sequence belongs to the AP endonuclease 2 family. It depends on Zn(2+) as a cofactor.

It catalyses the reaction Endonucleolytic cleavage to 5'-phosphooligonucleotide end-products.. Functionally, endonuclease IV plays a role in DNA repair. It cleaves phosphodiester bonds at apurinic or apyrimidinic (AP) sites, generating a 3'-hydroxyl group and a 5'-terminal sugar phosphate. In Bacillus anthracis (strain A0248), this protein is Probable endonuclease 4.